Consider the following 503-residue polypeptide: Protein FAM124A (503 aa).

Residues 434–470 (LAQSDTVPGRQNHSSDSLHSVSDISSSPCPVFPSTPA) form a disordered region. Residues 436 to 445 (QSDTVPGRQN) show a composition bias toward polar residues. A compositionally biased stretch (low complexity) spans 447–460 (SSDSLHSVSDISSS).

This sequence belongs to the FAM124 family.

The protein is Protein FAM124A (fam124a) of Xenopus tropicalis (Western clawed frog).